A 324-amino-acid polypeptide reads, in one-letter code: Muscleblind-like protein (324 aa).

2 C3H1-type zinc fingers span residues 38–66 (WLQV…HPPP) and 72–100 (QGRV…HPPQ).

The protein belongs to the muscleblind family. In terms of tissue distribution, expressed in neurons around the pharynx.

Its subcellular location is the nucleus. Binds to RNA with repeat sequences 5'-CUG-3' and 5'-CCUG-3'. The sequence is that of Muscleblind-like protein (mbl-1) from Caenorhabditis elegans.